The following is a 267-amino-acid chain: Alpha carbonic anhydrase 4 (267 aa).

The signal sequence occupies residues 1 to 26 (MDTNAKTIFFMAMCFIYLSFPNISHA). N-linked (GlcNAc...) asparagine glycosylation occurs at Asn22. One can recognise an Alpha-carbonic anhydrase domain in the interval 34–264 (TPFTYEQKTE…SKGRSVWFYD (231 aa)). Cysteines 59 and 214 form a disulfide. His99 (proton acceptor) is an active-site residue. His125 and His127 together coordinate Zn(2+). An N-linked (GlcNAc...) asparagine glycan is attached at Asn135. Residue His144 coordinates Zn(2+). 210–211 (TV) provides a ligand contact to substrate.

It belongs to the alpha-class carbonic anhydrase family. Zn(2+) is required as a cofactor. N-glycosylated.

Its subcellular location is the plastid. It is found in the chloroplast stroma. The enzyme catalyses hydrogencarbonate + H(+) = CO2 + H2O. In terms of biological role, reversible hydration of carbon dioxide. The polypeptide is Alpha carbonic anhydrase 4 (ACA4) (Arabidopsis thaliana (Mouse-ear cress)).